Here is a 111-residue protein sequence, read N- to C-terminus: Photosystem II reaction center Psb28 protein (111 aa).

It belongs to the Psb28 family. Part of the photosystem II complex.

It localises to the cellular thylakoid membrane. This chain is Photosystem II reaction center Psb28 protein, found in Gloeothece citriformis (strain PCC 7424) (Cyanothece sp. (strain PCC 7424)).